Consider the following 418-residue polypeptide: Serine hydroxymethyltransferase (418 aa).

(6S)-5,6,7,8-tetrahydrofolate is bound by residues Leu121 and 125–127 (GHL). Lys230 carries the post-translational modification N6-(pyridoxal phosphate)lysine. Residues Glu246 and 355–357 (SPF) contribute to the (6S)-5,6,7,8-tetrahydrofolate site.

Belongs to the SHMT family. In terms of assembly, homodimer. It depends on pyridoxal 5'-phosphate as a cofactor.

It localises to the cytoplasm. The enzyme catalyses (6R)-5,10-methylene-5,6,7,8-tetrahydrofolate + glycine + H2O = (6S)-5,6,7,8-tetrahydrofolate + L-serine. The protein operates within one-carbon metabolism; tetrahydrofolate interconversion. Its pathway is amino-acid biosynthesis; glycine biosynthesis; glycine from L-serine: step 1/1. Its function is as follows. Catalyzes the reversible interconversion of serine and glycine with tetrahydrofolate (THF) serving as the one-carbon carrier. This reaction serves as the major source of one-carbon groups required for the biosynthesis of purines, thymidylate, methionine, and other important biomolecules. Also exhibits THF-independent aldolase activity toward beta-hydroxyamino acids, producing glycine and aldehydes, via a retro-aldol mechanism. The protein is Serine hydroxymethyltransferase of Streptococcus pneumoniae (strain Hungary19A-6).